A 273-amino-acid chain; its full sequence is Hemin import ATP-binding protein HmuV (273 aa).

In terms of domain architecture, ABC transporter spans 2-256; that stretch reads LTAHHLDVAR…AHIAQCYGFA (255 aa). 34-41 contacts ATP; the sequence is GRNGAGKS.

This sequence belongs to the ABC transporter superfamily. Heme (hemin) importer (TC 3.A.1.14.5) family. As to quaternary structure, the complex is composed of two ATP-binding proteins (HmuV), two transmembrane proteins (HmuU) and a solute-binding protein (HmuT).

It localises to the cell inner membrane. Its function is as follows. Part of the ABC transporter complex HmuTUV involved in hemin import. Responsible for energy coupling to the transport system. In Burkholderia ambifaria (strain ATCC BAA-244 / DSM 16087 / CCUG 44356 / LMG 19182 / AMMD) (Burkholderia cepacia (strain AMMD)), this protein is Hemin import ATP-binding protein HmuV.